We begin with the raw amino-acid sequence, 203 residues long: Amelogenin, Y isoform (203 aa).

An N-terminal signal peptide occupies residues 1–16 (MGTWILFACLVGAAFA). The tract at residues 116–180 (MPVPGQQSMT…PPLPPMFPMR (65 aa)) is disordered. Residues 120 to 130 (GQQSMTPTQHH) are compositionally biased toward polar residues. Low complexity predominate over residues 131-142 (QPNLPLPAQQPF). Over residues 143–180 (QPQPVQPLPHQPMQPQPPVQPMQPLLPQPPLPPMFPMR) the composition is skewed to pro residues.

The protein belongs to the amelogenin family.

It localises to the secreted. It is found in the extracellular space. The protein localises to the extracellular matrix. Plays a role in biomineralization. Seems to regulate the formation of crystallites during the secretory stage of tooth enamel development. Thought to play a major role in the structural organization and mineralization of developing enamel. In Pan troglodytes (Chimpanzee), this protein is Amelogenin, Y isoform (AMELY).